Consider the following 284-residue polypeptide: Putative ABC transporter ATP-binding protein sll0385 (284 aa).

The 228-residue stretch at 51–278 (IRVRELSFAY…QTLMESHGLE (228 aa)) folds into the ABC transporter domain. An ATP-binding site is contributed by 84-91 (GHNGCGKT).

Belongs to the ABC transporter superfamily.

The protein localises to the cell inner membrane. Functionally, probably part of an ABC transporter complex. Responsible for energy coupling to the transport system. The polypeptide is Putative ABC transporter ATP-binding protein sll0385 (Synechocystis sp. (strain ATCC 27184 / PCC 6803 / Kazusa)).